Here is a 158-residue protein sequence, read N- to C-terminus: MGIGNENKGFITASADALINWVRTGSLWPVTTGLACCAVEMMHAGAARYDLDRFGIVFRPSPRQSDVLIVAGTLCNKMAPALRQVYDQMPDPKWVISMGSCANGGGYYHYSYSVVRGCDRIIPVDIYVPGCPPTAEALVYGIIQLQNKIIRKDTIARK.

[4Fe-4S] cluster is bound by residues Cys36, Cys37, Cys101, and Cys131.

It belongs to the complex I 20 kDa subunit family. As to quaternary structure, NDH-1 is composed of 14 different subunits. Subunits NuoB, C, D, E, F, and G constitute the peripheral sector of the complex. [4Fe-4S] cluster serves as cofactor.

The protein resides in the cell inner membrane. It carries out the reaction a quinone + NADH + 5 H(+)(in) = a quinol + NAD(+) + 4 H(+)(out). In terms of biological role, NDH-1 shuttles electrons from NADH, via FMN and iron-sulfur (Fe-S) centers, to quinones in the respiratory chain. The immediate electron acceptor for the enzyme in this species is believed to be ubiquinone. Couples the redox reaction to proton translocation (for every two electrons transferred, four hydrogen ions are translocated across the cytoplasmic membrane), and thus conserves the redox energy in a proton gradient. This chain is NADH-quinone oxidoreductase subunit B, found in Francisella philomiragia subsp. philomiragia (strain ATCC 25017 / CCUG 19701 / FSC 153 / O#319-036).